The chain runs to 734 residues: Ribosomal RNA large subunit methyltransferase K/L (734 aa).

Residues 43 to 154 (VGYRSCLWSR…RNQLTLSLDL (112 aa)) form the THUMP domain.

The protein belongs to the methyltransferase superfamily. RlmKL family.

The protein localises to the cytoplasm. It catalyses the reaction guanosine(2445) in 23S rRNA + S-adenosyl-L-methionine = N(2)-methylguanosine(2445) in 23S rRNA + S-adenosyl-L-homocysteine + H(+). It carries out the reaction guanosine(2069) in 23S rRNA + S-adenosyl-L-methionine = N(2)-methylguanosine(2069) in 23S rRNA + S-adenosyl-L-homocysteine + H(+). Specifically methylates the guanine in position 2445 (m2G2445) and the guanine in position 2069 (m7G2069) of 23S rRNA. This chain is Ribosomal RNA large subunit methyltransferase K/L, found in Hydrogenovibrio crunogenus (strain DSM 25203 / XCL-2) (Thiomicrospira crunogena).